The sequence spans 514 residues: Peptide chain release factor 3 (514 aa).

In terms of domain architecture, tr-type G spans 8 to 268 (KKRRTFAIIS…SFLAFAPEPH (261 aa)). GTP is bound by residues 17-24 (SHPDAGKT), 85-89 (DTPGH), and 139-142 (NKLD).

The protein belongs to the TRAFAC class translation factor GTPase superfamily. Classic translation factor GTPase family. PrfC subfamily.

The protein resides in the cytoplasm. Increases the formation of ribosomal termination complexes and stimulates activities of RF-1 and RF-2. It binds guanine nucleotides and has strong preference for UGA stop codons. It may interact directly with the ribosome. The stimulation of RF-1 and RF-2 is significantly reduced by GTP and GDP, but not by GMP. The polypeptide is Peptide chain release factor 3 (Streptococcus mutans serotype c (strain ATCC 700610 / UA159)).